A 217-amino-acid chain; its full sequence is Octanoyltransferase (217 aa).

Positions 35–214 constitute a BPL/LPL catalytic domain; that stretch reads DEAGERIWLL…TLPAFLDKLR (180 aa). Substrate is bound by residues 73 to 80, 145 to 147, and 158 to 160; these read RGGRYTYH, AIG, and GFS. The active-site Acyl-thioester intermediate is the Cys-176.

The protein belongs to the LipB family.

Its subcellular location is the cytoplasm. It catalyses the reaction octanoyl-[ACP] + L-lysyl-[protein] = N(6)-octanoyl-L-lysyl-[protein] + holo-[ACP] + H(+). The protein operates within protein modification; protein lipoylation via endogenous pathway; protein N(6)-(lipoyl)lysine from octanoyl-[acyl-carrier-protein]: step 1/2. Catalyzes the transfer of endogenously produced octanoic acid from octanoyl-acyl-carrier-protein onto the lipoyl domains of lipoate-dependent enzymes. Lipoyl-ACP can also act as a substrate although octanoyl-ACP is likely to be the physiological substrate. This chain is Octanoyltransferase, found in Sphingopyxis alaskensis (strain DSM 13593 / LMG 18877 / RB2256) (Sphingomonas alaskensis).